A 265-amino-acid polypeptide reads, in one-letter code: MESRLFNTPAKKAFGQHFLVDRYYIDRIIHAINPQPNDHIVEIGPGQGAITLPLLKCCGSLTAIELDRDLIAPLTAAATPIGKLDIIHRDVLTVDLSILAKQGNKKLRLVGNLPYNISSPILFHVLQQAAIIADMHFMLQKEVVDRMAAPPGSKVYGRLSVMLQAWCEVTTMFVVPPDAFQPPPKVNSAITRLVPRDPTTIRIADTKRFSDIVRAAFGQRRKTLRNSLADICTPAHFEHAGIRTNARAEQLEVTEFIALANAKNT.

Residues His17, Leu19, Gly44, Glu65, Asp90, and Asn112 each coordinate S-adenosyl-L-methionine.

The protein belongs to the class I-like SAM-binding methyltransferase superfamily. rRNA adenine N(6)-methyltransferase family. RsmA subfamily.

It localises to the cytoplasm. The enzyme catalyses adenosine(1518)/adenosine(1519) in 16S rRNA + 4 S-adenosyl-L-methionine = N(6)-dimethyladenosine(1518)/N(6)-dimethyladenosine(1519) in 16S rRNA + 4 S-adenosyl-L-homocysteine + 4 H(+). Functionally, specifically dimethylates two adjacent adenosines (A1518 and A1519) in the loop of a conserved hairpin near the 3'-end of 16S rRNA in the 30S particle. May play a critical role in biogenesis of 30S subunits. The polypeptide is Ribosomal RNA small subunit methyltransferase A (Xylella fastidiosa (strain Temecula1 / ATCC 700964)).